Here is a 236-residue protein sequence, read N- to C-terminus: NEP1-interacting protein 1 (236 aa).

At 1–44 (MASSRFQSGFCPISSCPSLENFIERIKDACRFTLSAVLGTILSA) the chain is on the lumenal, thylakoid side. A helical transmembrane segment spans residues 45-65 (VLTFFFALVGTLLGALTGALI). At 66-78 (GQETESGFIRGAA) the chain is on the stromal side. A helical membrane pass occupies residues 79–99 (VGAISGAVFSIEVFESSLVLW). The Lumenal, thylakoid portion of the chain corresponds to 100-104 (KSNES). A helical transmembrane segment spans residues 105–125 (RFGCLLYLIDVIVSLISGRLV). Residues 126–236 (RERIGPAMLS…GSCPMCRRDL (111 aa)) lie on the Stromal side of the membrane. The RING-type; atypical zinc-finger motif lies at 191-233 (CSVCLQDFQLGETVRSLPHCHHMFHLPCIDNWLFRHGSCPMCR).

This sequence belongs to the RING-type zinc finger family. NIP subfamily. As to quaternary structure, interacts with RPOT2.

The protein resides in the plastid. The protein localises to the chloroplast thylakoid membrane. Functionally, intrinsic thylakoid membrane protein that fixes RPOT2 on the stromal side of the thylakoid membrane. The protein is NEP1-interacting protein 1 (NIP1) of Arabidopsis thaliana (Mouse-ear cress).